A 483-amino-acid chain; its full sequence is Cysteine proteinase 1, mitochondrial (483 aa).

The transit peptide at 1 to 30 (MLPTSVSRSLYLKTFRSHLLRAPQIVLKRM) directs the protein to the mitochondrion. Residues Cys102, His398, and Asn421 contribute to the active site. Lys483 is a propeptide (removed in mature form; by autocatalysis).

Belongs to the peptidase C1 family. Homohexamer. Binds to nucleic acids. Binds single-stranded DNA and RNA with higher affinity than double-stranded DNA. The N-terminus of isoform Cytoplasmic is blocked.

The protein localises to the mitochondrion. Its subcellular location is the cytoplasm. The catalysed reaction is Inactivates bleomycin B2 (a cytotoxic glycometallopeptide) by hydrolysis of a carboxyamide bond of beta-aminoalanine, but also shows general aminopeptidase activity. The specificity varies somewhat with source, but amino acid arylamides of Met, Leu and Ala are preferred.. Inhibited by E64, a specific inhibitor of cysteine proteases, N-ethylmaleimide, iodacetamide, and mercury and zinc ions. In terms of biological role, the normal physiological role of the enzyme is unknown, but it is not essential for the viability of yeast cells. Has aminopeptidase activity, shortening substrate peptides sequentially by 1 amino acid. Has bleomycin hydrolase activity, which can protect the cell from the toxic effects of bleomycin. Has homocysteine-thiolactonase activity, protecting the cell against homocysteine toxicity. Acts as a repressor in the GAL4 regulatory system, but this does not require either the peptidase or nucleic acid-binding activities. This chain is Cysteine proteinase 1, mitochondrial (LAP3), found in Saccharomyces cerevisiae (strain JAY291) (Baker's yeast).